Here is a 206-residue protein sequence, read N- to C-terminus: Ribosomal RNA large subunit methyltransferase E (206 aa).

S-adenosyl-L-methionine is bound by residues Gly-60, Trp-62, Asp-80, Asp-96, and Asp-121. The active-site Proton acceptor is Lys-161.

Belongs to the class I-like SAM-binding methyltransferase superfamily. RNA methyltransferase RlmE family.

It is found in the cytoplasm. The catalysed reaction is uridine(2552) in 23S rRNA + S-adenosyl-L-methionine = 2'-O-methyluridine(2552) in 23S rRNA + S-adenosyl-L-homocysteine + H(+). In terms of biological role, specifically methylates the uridine in position 2552 of 23S rRNA at the 2'-O position of the ribose in the fully assembled 50S ribosomal subunit. In Hydrogenovibrio crunogenus (strain DSM 25203 / XCL-2) (Thiomicrospira crunogena), this protein is Ribosomal RNA large subunit methyltransferase E.